The primary structure comprises 297 residues: NAD kinase (297 aa).

Aspartate 74 (proton acceptor) is an active-site residue. Residues 74–75, arginine 79, 148–149, arginine 176, aspartate 178, 189–194, and glutamine 248 contribute to the NAD(+) site; these read DG, NE, and TAYALS.

The protein belongs to the NAD kinase family. Requires a divalent metal cation as cofactor.

It localises to the cytoplasm. It catalyses the reaction NAD(+) + ATP = ADP + NADP(+) + H(+). Its function is as follows. Involved in the regulation of the intracellular balance of NAD and NADP, and is a key enzyme in the biosynthesis of NADP. Catalyzes specifically the phosphorylation on 2'-hydroxyl of the adenosine moiety of NAD to yield NADP. The chain is NAD kinase from Blochmanniella pennsylvanica (strain BPEN).